The following is a 249-amino-acid chain: Green-light absorbing proteorhodopsin (249 aa).

Positions 1 to 17 (MKLLLILGSVIALPTFA) are cleaved as a signal peptide. Helical transmembrane passes span 30-49 (GVSF…FFFV), 62-84 (LTVS…GVWI), 99-121 (LLTV…NVAG), 128-147 (LVGS…GIMA), 151-168 (AFII…ELWA), 189-211 (MMYI…YLMG), and 221-243 (LIYN…NVAV). K231 is subject to N6-(retinylidene)lysine.

The protein belongs to the archaeal/bacterial/fungal opsin family. Contains one covalently linked retinal chromophore.

The protein resides in the cell membrane. Light-driven proton pump that generates photothrophic energy. This is Green-light absorbing proteorhodopsin from Gamma-proteobacterium EBAC31A08.